Consider the following 330-residue polypeptide: FKBP12-interacting protein of 37 kDa (330 aa).

Met1 is modified (N-acetylmethionine). The span at 1–12 shows a compositional bias: acidic residues; sequence MEFSSQDDDFGG. Residues 1–43 form a disordered region; it reads MEFSSQDDDFGGDDSAANATRASGNRRSFGDLEDDEDDIFGST. Over residues 17–26 the composition is skewed to polar residues; sequence ANATRASGNR. Residues 56 to 308 are a coiled coil; the sequence is SLRGSLKNCK…KGLEIVSELV (253 aa).

This sequence belongs to the fl(2)d family. Forms homodimers. Interacts with MTA/EMB1706. Interacts with FKBP12; interaction is inhibited by the immunosuppressive drug FK506. Interacts with VIR. Associates with MTA, MTB, VIR and HAKAI to form the m6A writer complex which is essential for adenosine methylation at specific mRNA sequences. Ubiquitously expressed with higher levels in primary and lateral roots, leaves, trichomes, and in pollen grains (at protein level).

It is found in the nucleus speckle. The protein localises to the nucleus. The protein resides in the nucleoplasm. Probable regulatory subunit of the N6-methyltransferase complex, a multiprotein complex that mediates N6-methyladenosine (m6A) methylation at the 5'-[AG]GAC-3' consensus sites of some mRNAs. Associates with MTA, MTB, VIR and HAKAI to form the m6A writer complex which is essential for adenosine methylation at specific mRNA sequences. N6-methyladenosine (m6A) plays a role in mRNA stability, processing, translation efficiency and editing. Essential protein required during endosperm development and embryogenesis. Involved in endoreduplication, especially in trichomes. May play a role in splicing events. This is FKBP12-interacting protein of 37 kDa from Arabidopsis thaliana (Mouse-ear cress).